The following is a 411-amino-acid chain: E3 ubiquitin-protein ligase PUB23 (411 aa).

Residues glutamate 11 to tyrosine 86 enclose the U-box domain. 4 ARM repeats span residues alanine 132 to threonine 173, glutamate 175 to tyrosine 203, aspartate 221 to proline 261, and glycine 263 to glutamine 306.

Interacts with RPN12A. Auto-ubiquitinated.

Its subcellular location is the cytoplasm. It carries out the reaction S-ubiquitinyl-[E2 ubiquitin-conjugating enzyme]-L-cysteine + [acceptor protein]-L-lysine = [E2 ubiquitin-conjugating enzyme]-L-cysteine + N(6)-ubiquitinyl-[acceptor protein]-L-lysine.. Its pathway is protein modification; protein ubiquitination. E3 ubiquitin-protein ligase that negatively regulates water stress response. May control in coordination with PUB23 a drought signaling pathway by ubiquitinating cytosolic RPN12a. Acts as a negative regulator of the immunity triggered by the pathogen-associated molecular patterns (PAMPs), in association with PUB22 and PUB24. This chain is E3 ubiquitin-protein ligase PUB23 (PUB23), found in Arabidopsis thaliana (Mouse-ear cress).